The chain runs to 343 residues: L-threonine 3-dehydrogenase (343 aa).

Cysteine 40 serves as a coordination point for Zn(2+). Residues threonine 42 and histidine 45 each act as charge relay system in the active site. The Zn(2+) site is built by histidine 65, glutamate 66, cysteine 95, cysteine 98, cysteine 101, and cysteine 109. Residues isoleucine 177, aspartate 197, arginine 202, 264–266, and 288–289 each bind NAD(+); these read LGI and IY.

It belongs to the zinc-containing alcohol dehydrogenase family. In terms of assembly, homotetramer. Requires Zn(2+) as cofactor.

The protein localises to the cytoplasm. It carries out the reaction L-threonine + NAD(+) = (2S)-2-amino-3-oxobutanoate + NADH + H(+). The protein operates within amino-acid degradation; L-threonine degradation via oxydo-reductase pathway; glycine from L-threonine: step 1/2. In terms of biological role, catalyzes the NAD(+)-dependent oxidation of L-threonine to 2-amino-3-ketobutyrate. The sequence is that of L-threonine 3-dehydrogenase from Aliivibrio salmonicida (strain LFI1238) (Vibrio salmonicida (strain LFI1238)).